Consider the following 175-residue polypeptide: ATP-dependent protease subunit HslV (175 aa).

The active site involves Thr2. Na(+) is bound by residues Gly158, Cys161, and Thr164.

Belongs to the peptidase T1B family. HslV subfamily. In terms of assembly, a double ring-shaped homohexamer of HslV is capped on each side by a ring-shaped HslU homohexamer. The assembly of the HslU/HslV complex is dependent on binding of ATP.

Its subcellular location is the cytoplasm. The enzyme catalyses ATP-dependent cleavage of peptide bonds with broad specificity.. Its activity is regulated as follows. Allosterically activated by HslU binding. Its function is as follows. Protease subunit of a proteasome-like degradation complex believed to be a general protein degrading machinery. In Haemophilus influenzae (strain PittEE), this protein is ATP-dependent protease subunit HslV.